A 430-amino-acid chain; its full sequence is C4-dicarboxylate transport protein (430 aa).

8 helical membrane passes run 9 to 29, 45 to 65, 79 to 99, 149 to 169, 185 to 205, 223 to 243, 308 to 328, and 356 to 376; these read VLYVQVIFAIIVGVILGHFYP, LIKMVIGPIIFCTVVTGIAGM, LLYFEIVSTFALLLGLAATHL, GEILQILLIALLFGSVLAHLG, VLFGIVHIVTKLAPIGAFGAM, LIGTFYLTSVVFVLVVLGAIA, IYMTMAVLFIAQATNIELTWM, and AATLAVVPTIPLSGMVLILGI.

It belongs to the dicarboxylate/amino acid:cation symporter (DAACS) (TC 2.A.23) family.

The protein resides in the cell inner membrane. Responsible for the transport of dicarboxylates such as succinate, fumarate, and malate from the periplasm across the membrane. The protein is C4-dicarboxylate transport protein of Burkholderia orbicola (strain AU 1054).